Here is a 107-residue protein sequence, read N- to C-terminus: Putative ATP synthase subunit f, mitochondrial (107 aa).

This sequence belongs to the ATPase F chain family. F-type ATPases have 2 components, CF(1) - the catalytic core - and CF(0) - the membrane proton channel. CF(0) seems to have nine subunits: a, b, c, d, e, f, g, F6 and 8 (or A6L).

The protein localises to the mitochondrion membrane. In terms of biological role, mitochondrial membrane ATP synthase (F(1)F(0) ATP synthase or Complex V) produces ATP from ADP in the presence of a proton gradient across the membrane which is generated by electron transport complexes of the respiratory chain. F-type ATPases consist of two structural domains, F(1) - containing the extramembraneous catalytic core and F(0) - containing the membrane proton channel, linked together by a central stalk and a peripheral stalk. During catalysis, ATP synthesis in the catalytic domain of F(1) is coupled via a rotary mechanism of the central stalk subunits to proton translocation. Part of the complex F(0) domain. Minor subunit located with subunit a in the membrane. In Drosophila melanogaster (Fruit fly), this protein is Putative ATP synthase subunit f, mitochondrial.